A 349-amino-acid polypeptide reads, in one-letter code: UDP-3-O-acylglucosamine N-acyltransferase (349 aa).

Catalysis depends on His-248, which acts as the Proton acceptor.

The protein belongs to the transferase hexapeptide repeat family. LpxD subfamily. In terms of assembly, homotrimer.

The catalysed reaction is a UDP-3-O-[(3R)-3-hydroxyacyl]-alpha-D-glucosamine + a (3R)-hydroxyacyl-[ACP] = a UDP-2-N,3-O-bis[(3R)-3-hydroxyacyl]-alpha-D-glucosamine + holo-[ACP] + H(+). It functions in the pathway bacterial outer membrane biogenesis; LPS lipid A biosynthesis. Its function is as follows. Catalyzes the N-acylation of UDP-3-O-acylglucosamine using 3-hydroxyacyl-ACP as the acyl donor. Is involved in the biosynthesis of lipid A, a phosphorylated glycolipid that anchors the lipopolysaccharide to the outer membrane of the cell. This Gloeothece citriformis (strain PCC 7424) (Cyanothece sp. (strain PCC 7424)) protein is UDP-3-O-acylglucosamine N-acyltransferase.